The following is a 901-amino-acid chain: MKRENNLVLSLLFFVIVFLMQVGEAQNRITNVNVGIVNDIGTAYSNMTLLCINMSLSDFYSSHPETQTRLVTTVVDSKNDVVTAAAAALDLITNKEVKAILGPWTSMQAQFMIEMGQKSQVPIVTYSATSPSLASIRSQYFFRATYDDSSQVHAIKEIIKLFGWREVAPVYVDDTFGEGIMPRLTDVLQEINVRIPYRTVISPNATDDEISVELLRMMTLPTRVFVVHLVELLASRFFAKATEIGLMKQGYVWILTNTITDVLSIMNETEIETMQGVLGVKTYVPRSKELENFRSRWTKRFPISDLNVYGLWAYDATTALALAIEEAGTSNLTFVKMDAKRNVSELQGLGVSQYGPKLLQTLSRVRFQGLAGDFQFINGELQPSVFEIVNVNGQGGRTIGFWMKEYGLFKNVDQKPASKTTFSSWQDRLRPIIWPGDTTSVPKGWEIPTNGKRLQIGVPVNNTFQQFVKATRDPITNSTIFSGFSIDYFEAVIQAIPYDISYDFIPFQDGGYDALVYQVYLGKYDAVVADTTISSNRSMYVDFSLPYTPSGVGLVVPVKDSVRRSSTIFLMPLTLALWLISLLSFFIIGLVVWVLEHRVNPDFDGPGQYQLSTIFWFSFSIMVFAPRERVLSFWARVVVIIWYFLVLVLTQSYTASLASLLTTQHLHPTVTNINSLLAKGESVGYQSSFILGRLRDSGFSEASLVSYGSPEHCDALLSKGQAEGGVSAVLMEVPYVRIFLGQYCNKYKMVQTPFKVDGLGFVFPIGSPLVADISRAILKVEESNKANQLENAWFKPIDESCPDPLTNPDPNPSVSFRQLGFDSFWVLFLVAAIVCTMALLKFVYQFLKENPNQRNLRVLWEKFNEPDQKSYIKDVTKCQCSSGQGMPKNGQEGANAVNNGN.

Positions 1-25 (MKRENNLVLSLLFFVIVFLMQVGEA) are cleaved as a signal peptide. Topologically, residues 26 to 574 (QNRITNVNVG…SSTIFLMPLT (549 aa)) are extracellular. Residues Asn-46, Asn-53, Asn-204, Asn-267, Asn-331, Asn-342, Asn-461, Asn-477, and Asn-536 are each glycosylated (N-linked (GlcNAc...) asparagine). The helical transmembrane segment at 575–595 (LALWLISLLSFFIIGLVVWVL) threads the bilayer. The Cytoplasmic portion of the chain corresponds to 596–604 (EHRVNPDFD). A helical transmembrane segment spans residues 605–625 (GPGQYQLSTIFWFSFSIMVFA). Over 626-629 (PRER) the chain is Cytoplasmic. Residues 630-650 (VLSFWARVVVIIWYFLVLVLT) form a helical membrane-spanning segment. Residues 651–823 (QSYTASLASL…VSFRQLGFDS (173 aa)) are Extracellular-facing. The helical transmembrane segment at 824–844 (FWVLFLVAAIVCTMALLKFVY) threads the bilayer. The Cytoplasmic segment spans residues 845–901 (QFLKENPNQRNLRVLWEKFNEPDQKSYIKDVTKCQCSSGQGMPKNGQEGANAVNNGN).

This sequence belongs to the glutamate-gated ion channel (TC 1.A.10.1) family. As to quaternary structure, may form heteromers. Expressed predominantly in roots. First strongly detected in all cell types of the root except at the apex. Later expressed at the root-shoot junction.

Its subcellular location is the membrane. Functionally, glutamate-gated receptor that probably acts as a non-selective cation channel. May be involved in light-signal transduction and calcium homeostasis via the regulation of calcium influx into cells. The polypeptide is Glutamate receptor 2.1 (GLR2.1) (Arabidopsis thaliana (Mouse-ear cress)).